A 541-amino-acid chain; its full sequence is MAKIIAYEEDARQGMLAGLDRLANTVKVTLGPKGRNVVLDKSYGAPTITNDGVSIAKEIDLEDPYERIGAELVKEVAKKTDDVAGDGTTTATVLAQSLVHEGLKNVVAGSNPIALRRGIEKASEAIVKELLASAKDVETKDQIAATATISAADPEVGEKIAEALDKVGQDGVVTVEDNNKFGLDLDFTEGMRFDKGYISPYFVTNAEDQTAVLEDPYILLTSGKVSSQQDIVHVAELVMKSGKPLLIIAEDVDGEALPTLVLNKIRGTFNTVAVKAPGFGDRRKAMLQDMAILTGAQVVSDDLGLKLDSIDASVFGHAAKVIVSKDETTIVSGAGSKEDVEARVAQIRAEIENTDSDYDREKLQERLAKLAGGVAVIKVGAATEVEAKERKHRIEDAVRNAKAAIEEGLLPGGGVALVQAAAKVEKSADIVALSGEEATGAAIVFRAVEAPIKQIAQNSGVSGDVVLNKVRELPEGEGFNAATNTYEDLLAAGVTDPVKVTRSALQNAASIAGLFLTTEAVVANKPEKPAAAPQAGAEMGY.

ATP-binding positions include Thr-29–Pro-32, Asp-86–Thr-90, Gly-413, Asn-480–Ala-482, and Asp-496.

This sequence belongs to the chaperonin (HSP60) family. Forms a cylinder of 14 subunits composed of two heptameric rings stacked back-to-back. Interacts with the co-chaperonin GroES.

Its subcellular location is the cytoplasm. The catalysed reaction is ATP + H2O + a folded polypeptide = ADP + phosphate + an unfolded polypeptide.. Functionally, together with its co-chaperonin GroES, plays an essential role in assisting protein folding. The GroEL-GroES system forms a nano-cage that allows encapsulation of the non-native substrate proteins and provides a physical environment optimized to promote and accelerate protein folding. The chain is Chaperonin GroEL from Gardnerella vaginalis.